We begin with the raw amino-acid sequence, 494 residues long: DnaJ-related protein rsp1 (494 aa).

Residues 12-78 (DYYTILGAES…KLRELFDQRR (67 aa)) enclose the J domain. The segment covering 229 to 242 (SEISNGLNSNGVEN) has biased composition (polar residues). The disordered stretch occupies residues 229–354 (SEISNGLNSN…NDSTSNSTEY (126 aa)). Low complexity predominate over residues 243-256 (SSITKSSPRSSSSS). Positions 270–287 (IFTSPNTPEHPSVYQTDI) are enriched in polar residues. Residues 321–331 (LSRSKSSSLSR) show a composition bias toward low complexity. Over residues 332-354 (NQTRSQLNDLSAENDSTSNSTEY) the composition is skewed to polar residues.

In terms of assembly, interacts iwth ssa1.

The protein localises to the cytoplasm. It localises to the cytoskeleton. Its subcellular location is the nucleus. In terms of biological role, has a role in the proper organization of the interphase microtubule cytoskeleton. Required for equatorial microtubule organizing center (eMTOC) disassembly into satellites, contributing to the dynamic redistribution of MTOC components for organization of interphase microtubules. This chain is DnaJ-related protein rsp1 (rsp1), found in Schizosaccharomyces pombe (strain 972 / ATCC 24843) (Fission yeast).